The sequence spans 581 residues: Chaperonin GroEL 1 (581 aa).

ATP is bound by residues 29-32 (TIGP), 86-90 (DGTTT), Gly413, and Asp492. A disordered region spans residues 522-541 (PEPEAAGPGGPGADPMGGMG). The span at 528–541 (GPGGPGADPMGGMG) shows a compositional bias: gly residues.

The protein belongs to the chaperonin (HSP60) family. In terms of assembly, forms a cylinder of 14 subunits composed of two heptameric rings stacked back-to-back. Interacts with the co-chaperonin GroES.

It localises to the cytoplasm. The enzyme catalyses ATP + H2O + a folded polypeptide = ADP + phosphate + an unfolded polypeptide.. Together with its co-chaperonin GroES, plays an essential role in assisting protein folding. The GroEL-GroES system forms a nano-cage that allows encapsulation of the non-native substrate proteins and provides a physical environment optimized to promote and accelerate protein folding. In Prochlorococcus marinus (strain MIT 9301), this protein is Chaperonin GroEL 1.